Here is a 311-residue protein sequence, read N- to C-terminus: Probable cell division protein WhiA (311 aa).

The segment at residues T277–E311 is a DNA-binding region (H-T-H motif).

This sequence belongs to the WhiA family.

Functionally, involved in cell division and chromosome segregation. The sequence is that of Probable cell division protein WhiA from Lactobacillus helveticus (strain DPC 4571).